The sequence spans 600 residues: MGRRKIEIKAIKDDRNRSVTFLKRKGGLFKKAHELAVLCSVDVAVIIFGHNKKLYEFSSCDMRETLGRYQYYGPPHEHKGPEDFNGKRDDDDDEDETTPAPEEMQPTTQNPPAVVPAHIPSHPGFQHVNHAPSASPPISNGIPFDPRHGTPQPQGASRPSSRNHLRRVSSNLGPQQHHGTPPPPPQNGFAYIPNPSMYHPNANPNIAQQPRPPQFAHYGPQQPLPPHAIPPHPMPQPVPPHHQAPQHLPQHPHPLAQQTPAMGLSQPPHASIPQVAQPFLPEQGRNSIPPAFPTEQSQPPRPVSLPDVSSADQMVGPLKVETSPSPPHQRSLSSKSRSIFTPIDDRGSVLARHFGLGPPTCESPRTESADVKAEAKQNDSKEIKPPAQPVAPPPPPRTTADAARSQSAPDIKPPPRTNSGQLPSKRPQLKVQIPSENSDRGSATADSSSSTGNQTVTPAKANPDTNHSGVVLPPPSPSAGAILSAGATGPPNPFARPPPPGTASQNSNAYNSNNNIETPISALPSRFVSDALLPSPSSFFPEWGFGRSGPDTNMLPSPLTFPTPAVQTGPGFAREDEQEKKRKSPDSGPSIEGTAKKSKT.

The 61-residue stretch at 1–61 (MGRRKIEIKA…KKLYEFSSCD (61 aa)) folds into the MADS-box domain. Disordered regions lie at residues 71 to 518 (YYGP…NIET) and 544 to 600 (GFGR…KSKT). Basic and acidic residues predominate over residues 75–89 (PHEHKGPEDFNGKRD). Positions 151–160 (PQPQGASRPS) are enriched in polar residues. The span at 222–242 (QPLPPHAIPPHPMPQPVPPHH) shows a compositional bias: pro residues. Residues 243–260 (QAPQHLPQHPHPLAQQTP) are compositionally biased toward low complexity. Residues 328 to 339 (HQRSLSSKSRSI) show a composition bias toward polar residues. Over residues 364 to 384 (PRTESADVKAEAKQNDSKEIK) the composition is skewed to basic and acidic residues. Pro residues predominate over residues 386 to 397 (PAQPVAPPPPPR). Residues 440–452 (RGSATADSSSSTG) show a composition bias toward low complexity. Polar residues predominate over residues 453 to 468 (NQTVTPAKANPDTNHS). Over residues 490–501 (PPNPFARPPPPG) the composition is skewed to pro residues. Positions 503–515 (ASQNSNAYNSNNN) are enriched in low complexity.

It belongs to the MEF2 family. As to quaternary structure, interacts with hsp90. Post-translationally, phosphorylation during asexual development.

Its subcellular location is the nucleus. Its function is as follows. Transcription factor; part of cell wall integrity (CWI) signaling pathway composed of pkcA, the bck1-mkk2-mpka MAPK cascade and the downstream rlmA transcription regulator. The CWI signaling pathway regulates cell wall integrity and pyomelanin formation. CWI also controls oxidative stress response, gliotoxin production, iron adaptation and asexual development. Finally, CWI is constitutively required for A.fumigatus to cope with the temperature increase found in the mammalian lung environment, during infection. Positively regulates the phosphorylation of mpkA. Involved in tolerance to oxidative damage and transcriptional regulation of genes related to oxidative stress adaptation. Directly regulates the expression of regulators of conidiation, including flbB, flbC, brlA, abaA, and rasB, as well as genes involved in cell wall synthesis and remodeling. Specifically associates with the target fumiquinazoline (fmq) cluster genes promoters at conserved motifs (5'-TAWWWWTA-3') during conidiation to supplement mature conidia with fumiquinazoline C. Also controls the DHN-melanin production via binding the promoter of pksP. The polypeptide is Transcription factor rlmA (Aspergillus fumigatus (strain ATCC MYA-4609 / CBS 101355 / FGSC A1100 / Af293) (Neosartorya fumigata)).